Here is a 276-residue protein sequence, read N- to C-terminus: Dermonecrotic toxin LlSicTox-alphaIV2i (276 aa).

His-5 is an active-site residue. Mg(2+) contacts are provided by Glu-25 and Asp-27. Residue His-41 is the Nucleophile of the active site. 2 disulfides stabilise this stretch: Cys-45/Cys-51 and Cys-47/Cys-193. Position 85 (Asp-85) interacts with Mg(2+).

This sequence belongs to the arthropod phospholipase D family. Class II subfamily. The cofactor is Mg(2+). As to expression, expressed by the venom gland.

It localises to the secreted. The catalysed reaction is an N-(acyl)-sphingosylphosphocholine = an N-(acyl)-sphingosyl-1,3-cyclic phosphate + choline. It carries out the reaction an N-(acyl)-sphingosylphosphoethanolamine = an N-(acyl)-sphingosyl-1,3-cyclic phosphate + ethanolamine. The enzyme catalyses a 1-acyl-sn-glycero-3-phosphocholine = a 1-acyl-sn-glycero-2,3-cyclic phosphate + choline. It catalyses the reaction a 1-acyl-sn-glycero-3-phosphoethanolamine = a 1-acyl-sn-glycero-2,3-cyclic phosphate + ethanolamine. Its function is as follows. Dermonecrotic toxins cleave the phosphodiester linkage between the phosphate and headgroup of certain phospholipids (sphingolipid and lysolipid substrates), forming an alcohol (often choline) and a cyclic phosphate. This toxin acts on sphingomyelin (SM). It may also act on ceramide phosphoethanolamine (CPE), lysophosphatidylcholine (LPC) and lysophosphatidylethanolamine (LPE), but not on lysophosphatidylserine (LPS), and lysophosphatidylglycerol (LPG). It acts by transphosphatidylation, releasing exclusively cyclic phosphate products as second products. Induces dermonecrosis, hemolysis, increased vascular permeability, edema, inflammatory response, and platelet aggregation. The protein is Dermonecrotic toxin LlSicTox-alphaIV2i of Loxosceles laeta (South American recluse spider).